We begin with the raw amino-acid sequence, 549 residues long: Hydroxylamine reductase (549 aa).

Residues C3, C6, C15, and C21 each contribute to the [4Fe-4S] cluster site. Hybrid [4Fe-2O-2S] cluster is bound by residues H244, E268, C313, C405, C433, C458, E492, and K494. C405 carries the cysteine persulfide modification.

This sequence belongs to the HCP family. [4Fe-4S] cluster is required as a cofactor. The cofactor is hybrid [4Fe-2O-2S] cluster.

It is found in the cytoplasm. It catalyses the reaction A + NH4(+) + H2O = hydroxylamine + AH2 + H(+). In terms of biological role, catalyzes the reduction of hydroxylamine to form NH(3) and H(2)O. The chain is Hydroxylamine reductase from Crocosphaera subtropica (strain ATCC 51142 / BH68) (Cyanothece sp. (strain ATCC 51142)).